We begin with the raw amino-acid sequence, 82 residues long: Cytochrome b559 subunit alpha (82 aa).

Residues 22–36 (VIHAVTLPSIFLAGF) form a helical membrane-spanning segment. His-24 is a heme binding site.

Belongs to the PsbE/PsbF family. Heterodimer of an alpha subunit and a beta subunit. PSII is composed of 1 copy each of membrane proteins PsbA, PsbB, PsbC, PsbD, PsbE, PsbF, PsbH, PsbI, PsbJ, PsbK, PsbL, PsbM, PsbT, PsbX, PsbY, PsbZ, Psb30/Ycf12, peripheral proteins PsbO, CyanoQ (PsbQ), PsbU, PsbV and a large number of cofactors. It forms dimeric complexes. Heme b is required as a cofactor.

It localises to the cellular thylakoid membrane. Functionally, this b-type cytochrome is tightly associated with the reaction center of photosystem II (PSII). PSII is a light-driven water:plastoquinone oxidoreductase that uses light energy to abstract electrons from H(2)O, generating O(2) and a proton gradient subsequently used for ATP formation. It consists of a core antenna complex that captures photons, and an electron transfer chain that converts photonic excitation into a charge separation. This is Cytochrome b559 subunit alpha from Synechococcus sp. (strain CC9605).